Here is a 493-residue protein sequence, read N- to C-terminus: 3-octaprenyl-4-hydroxybenzoate carboxy-lyase (493 aa).

Position 172 (Asn-172) interacts with Mn(2+). Residues 175 to 177 (IYR), 189 to 191 (RWL), and 194 to 195 (RG) contribute to the prenylated FMN site. Position 238 (Glu-238) interacts with Mn(2+). Residue Asp-287 is the Proton donor of the active site.

It belongs to the UbiD family. In terms of assembly, homohexamer. It depends on prenylated FMN as a cofactor. The cofactor is Mn(2+).

It localises to the cell membrane. The enzyme catalyses a 4-hydroxy-3-(all-trans-polyprenyl)benzoate + H(+) = a 2-(all-trans-polyprenyl)phenol + CO2. Its pathway is cofactor biosynthesis; ubiquinone biosynthesis. Functionally, catalyzes the decarboxylation of 3-octaprenyl-4-hydroxy benzoate to 2-octaprenylphenol, an intermediate step in ubiquinone biosynthesis. This chain is 3-octaprenyl-4-hydroxybenzoate carboxy-lyase, found in Shewanella sp. (strain MR-4).